A 208-amino-acid polypeptide reads, in one-letter code: Holliday junction resolvase RecU (208 aa).

Residues Thr87, Asp89, Glu102, and Gln121 each contribute to the Mg(2+) site.

It belongs to the RecU family. Mg(2+) serves as cofactor.

The protein resides in the cytoplasm. The catalysed reaction is Endonucleolytic cleavage at a junction such as a reciprocal single-stranded crossover between two homologous DNA duplexes (Holliday junction).. In terms of biological role, endonuclease that resolves Holliday junction intermediates in genetic recombination. Cleaves mobile four-strand junctions by introducing symmetrical nicks in paired strands. Promotes annealing of linear ssDNA with homologous dsDNA. Required for DNA repair, homologous recombination and chromosome segregation. This is Holliday junction resolvase RecU from Staphylococcus aureus (strain Mu3 / ATCC 700698).